Reading from the N-terminus, the 304-residue chain is Acetaldehyde dehydrogenase 2 (304 aa).

Cys131 (acyl-thioester intermediate) is an active-site residue. NAD(+) is bound by residues 162–170 (SAGPGTRKN) and Asn273.

It belongs to the acetaldehyde dehydrogenase family.

The catalysed reaction is acetaldehyde + NAD(+) + CoA = acetyl-CoA + NADH + H(+). The chain is Acetaldehyde dehydrogenase 2 from Dechloromonas aromatica (strain RCB).